Here is a 206-residue protein sequence, read N- to C-terminus: MPEVQPSALPKPAPRLGRDAAVASICGFVVALMVGASFAAVPFYDWFCRTTGFNGTTQVAGSAPSSEPLARKVSVRFDSNINGLPWKFEPEQREVEVAIGQVVTVYYSVTNTSKRATTGQAAYNVTPLTVGSYFTKINCFCFTEQTLAAGETREMPVVFYVDPAFAADNENDTVKNITLSYTFYPVREPPPKPLASGEPDQRKGNL.

Topologically, residues 1 to 17 (MPEVQPSALPKPAPRLG) are cytoplasmic. The helical; Signal-anchor for type II membrane protein transmembrane segment at 18-40 (RDAAVASICGFVVALMVGASFAA) threads the bilayer. The Periplasmic segment spans residues 41-206 (VPFYDWFCRT…GEPDQRKGNL (166 aa)).

Belongs to the COX11/CtaG family.

The protein localises to the cell inner membrane. In terms of biological role, exerts its effect at some terminal stage of cytochrome c oxidase synthesis, probably by being involved in the insertion of the copper B into subunit I. The protein is Cytochrome c oxidase assembly protein CtaG of Rhodopseudomonas palustris (strain BisB5).